Reading from the N-terminus, the 315-residue chain is MLKMESTQQMAVSIINSSFEAAVVAATSALENMGIEYDYQDIYSRVKNKFDFVMDDSGVKNNLIGKAITIDQALNNKFGSAIRNRNWLADTSRPAKLDEDVNKLRMMLSSKGIDQKMRVLNACFSVKRIPGKSSSIIKCTKLMRDKLERGEVEVDDSFVDEKMEVDTIDWKSRYEQLEQRFESLKSRVNEKYNNWVLKARKMNENMHSLQNVISQQQAHIAELQVYNNKLERDLQNKIGSLTSSIEWYLRSMELDPEIKADIEQQINSIDAINPLHAFDDLESVIRNLISDYDKLFLMFKGLIQRCNYQYSFGCE.

The segment at 1–149 is RNA-binding; sequence MLKMESTQQM…TKLMRDKLER (149 aa). The dimerization stretch occupies residues 150 to 206; sequence GEVEVDDSFVDEKMEVDTIDWKSRYEQLEQRFESLKSRVNEKYNNWVLKARKMNENM. Positions 166 to 237 form a coiled coil; that stretch reads DTIDWKSRYE…NKLERDLQNK (72 aa). The segment at 170-234 is interaction with host ZC3H7B; the sequence is WKSRYEQLEQ…VYNNKLERDL (65 aa). The tract at residues 208 to 315 is interaction with host EIF4G1; sequence SLQNVISQQQ…CNYQYSFGCE (108 aa).

The protein belongs to the rotavirus NSP3 family. In terms of assembly, homodimer. Interacts (via the coiled-coil region) with host ZC3H7B (via LD motif). Interacts with host EIF4G1.

It is found in the host cytoplasm. In terms of biological role, plays an important role in stimulating the translation of viral mRNAs. These mRNAs are capped but not polyadenylated, instead terminating in a conserved sequence 'GACC' at the 3' that is recognized by NSP3, which competes with host PABPC1 for EIF4G1 binding. The interaction between NSP3 and host EIF4G1 stabilizes the EIF4E-EIF4G1 interaction, thereby facilitating the initiation of capped mRNA translation. The polypeptide is Non-structural protein 3 (Macaca mulatta (Rhesus macaque)).